A 961-amino-acid polypeptide reads, in one-letter code: MSSSIDLLKLIAEKGADSQSAQDIVDNQVAQQLSAQIEYAKRSKKINVRNKLSIEEADAFRDRYGGAFDLNLTQQYHAPHSLAGALRVAEHYDCLDSFPPEDPVIDFGGSWWHHFSRRDKRVHSCCPVLGVRDAARHEERMCRMRKILQESDDFDEVPNFCLNRAQDCDVQADWAICIHGGYDMGFQGLCDAMHSHGVRVLRGTVMFDGAMLFDREGFLPLLKCHWQRDGSGADEVIKFDFENESTLSYIHGWQDLGSFFTESVHCIDGTTYLLEREMLKCNIMTYKIIATNLRCPRETLRHCVWFEDISKYVGVSIPEDWSLNRWKCVRVAKTTVREVEEIAFRCFKESKEWTENMKAVASILSAKSSTVIINGQAIMAGERLDIEDYHLVAFALTLNLYQKYEKLTALRDGMEWKGWCHHFKTRFWWGGDSSRAKVGWLRTLASRFPLLRLDSYADSFKFLTRLSNVEEFEQDSVPISRLRTFWTEEDLFDRLEHEVQTAKTKRSKKKAKVPPAAEIPQEEFHDAPESSSPESVSDDVKPVTDVVPDAEVSVEVPTDPRGISRHGAMKEFVRYCKRLHNNSESNLRHLWDISGGRGSEIANKSIFETYHRIDDMVNVHLANGNWLYPKKYDYTVGYNEHGLGPKHADETYIVDKTCACSNLRDIAEASAKVSVPTCDISMVDGVAGCGKTTAIKDAFRMGEDLIVTANRKSAEDVRMALFPDTYNSKVALDVVRTADSAIMHGVPSCHRLLVDEAGLLHYGQLLVVAALSKCSQVLAFGDTEQISFKSRDAGFKLLHGNLQYDRRDVVHKTYRCPQDVIAAVNLLKRKCGNRDTKYQSWTSESKVSRSLTKRRITSGLQVTIDPNRTYLTMTQADKAALQTRAKDFPVSKDWIDGHIKTVHEAQGISVDNVTLVRLKSTKCDLFKHEEYCLVALTRHKKSFEYCFNGELAGDLIFNCVK.

Residues valine 48–alanine 380 are methyltransferase. The Alphavirus-like MT domain maps to asparagine 71–phenylalanine 260. The segment at valine 392–alanine 409 is membrane association. The segment covering lysine 503–lysine 512 has biased composition (basic residues). The interval lysine 503 to lysine 541 is disordered. The 156-residue stretch at aspartate 655 to valine 810 folds into the (+)RNA virus helicase ATP-binding domain. The ATP-dependent helicase stretch occupies residues methionine 682 to cysteine 946. An ATP-binding site is contributed by glycine 685 to threonine 692. One can recognise a (+)RNA virus helicase C-terminal domain in the interval histidine 811–lysine 961.

The protein belongs to the bromoviridae replication protein 1a family. Interacts with RNA-directed RNA polymerase 2a.

The protein resides in the host endoplasmic reticulum membrane. Functionally, involved in the virus replication. Contains a helicase domain and a methyltransferase domain. The methyltransferase domain is probably involved in viral RNA capping. Involved in the formation of ER membrane spherular invaginations in which RNA replication complexes form. The polypeptide is Replication protein 1a (Bromus inermis (Smooth brome grass)).